A 485-amino-acid chain; its full sequence is Adenosylhomocysteinase 2 (485 aa).

3 residues coordinate substrate: Thr64, Asp139, and Glu205. 206 to 208 (TTT) provides a ligand contact to NAD(+). Positions 235 and 239 each coordinate substrate. NAD(+) contacts are provided by residues Asn240, 269 to 274 (GYGDVG), Glu292, Asn327, 348 to 350 (IGH), and Asn397.

It belongs to the adenosylhomocysteinase family. NAD(+) is required as a cofactor.

The enzyme catalyses S-adenosyl-L-homocysteine + H2O = L-homocysteine + adenosine. The protein operates within amino-acid biosynthesis; L-homocysteine biosynthesis; L-homocysteine from S-adenosyl-L-homocysteine: step 1/1. Adenosylhomocysteine is a competitive inhibitor of S-adenosyl-L-methionine-dependent methyl transferase reactions; therefore adenosylhomocysteinase may play a key role in the control of methylations via regulation of the intracellular concentration of adenosylhomocysteine. In Arabidopsis thaliana (Mouse-ear cress), this protein is Adenosylhomocysteinase 2 (SAHH2).